Here is a 179-residue protein sequence, read N- to C-terminus: Endoribonuclease YbeY (179 aa).

Zn(2+)-binding residues include His-148, His-152, and His-158.

It belongs to the endoribonuclease YbeY family. Zn(2+) serves as cofactor.

Its subcellular location is the cytoplasm. In terms of biological role, single strand-specific metallo-endoribonuclease involved in late-stage 70S ribosome quality control and in maturation of the 3' terminus of the 16S rRNA. This Prochlorococcus marinus (strain MIT 9215) protein is Endoribonuclease YbeY.